We begin with the raw amino-acid sequence, 445 residues long: 3-phosphoshikimate 1-carboxyvinyltransferase (445 aa).

Residues lysine 28, serine 29, and arginine 33 each coordinate 3-phosphoshikimate. Lysine 28 lines the phosphoenolpyruvate pocket. Positions 102 and 130 each coordinate phosphoenolpyruvate. 3-phosphoshikimate is bound by residues serine 179, serine 180, glutamine 181, glutamate 330, and histidine 357. Glutamine 181 serves as a coordination point for phosphoenolpyruvate. Glutamate 330 functions as the Proton acceptor in the catalytic mechanism. Residues arginine 361, arginine 405, and lysine 430 each contribute to the phosphoenolpyruvate site.

Belongs to the EPSP synthase family. In terms of assembly, monomer.

It localises to the cytoplasm. The catalysed reaction is 3-phosphoshikimate + phosphoenolpyruvate = 5-O-(1-carboxyvinyl)-3-phosphoshikimate + phosphate. Its pathway is metabolic intermediate biosynthesis; chorismate biosynthesis; chorismate from D-erythrose 4-phosphate and phosphoenolpyruvate: step 6/7. Its function is as follows. Catalyzes the transfer of the enolpyruvyl moiety of phosphoenolpyruvate (PEP) to the 5-hydroxyl of shikimate-3-phosphate (S3P) to produce enolpyruvyl shikimate-3-phosphate and inorganic phosphate. This chain is 3-phosphoshikimate 1-carboxyvinyltransferase, found in Bifidobacterium longum (strain DJO10A).